The sequence spans 261 residues: Acetylglutamate kinase (261 aa).

Residues 48 to 49, Arg70, and Asn164 each bind substrate; that span reads GG.

This sequence belongs to the acetylglutamate kinase family. ArgB subfamily.

It is found in the cytoplasm. The enzyme catalyses N-acetyl-L-glutamate + ATP = N-acetyl-L-glutamyl 5-phosphate + ADP. It participates in amino-acid biosynthesis; L-arginine biosynthesis; N(2)-acetyl-L-ornithine from L-glutamate: step 2/4. Functionally, catalyzes the ATP-dependent phosphorylation of N-acetyl-L-glutamate. In Roseiflexus sp. (strain RS-1), this protein is Acetylglutamate kinase.